The sequence spans 246 residues: Submandibular gland secretory Glx-rich protein CA (246 aa).

An N-terminal signal peptide occupies residues Met1 to Gly18. Positions Ser14–Pro223 are disordered. 7 stretches are compositionally biased toward low complexity: residues Pro39–Asp50, Glu58–Ala71, Gln81–Pro93, Gln104–Pro116, Gln127–Thr141, Gln150–Gln159, and Val178–Asn196. Repeat copies occupy residues Glu67–Asn89, Gln90–Asn112, Gln113–Asp135, Gln136–Asn158, and Gln159–Pro181. A 5 X 23 AA tandem repeats region spans residues Glu67–Pro181. Over residues Pro197–Arg216 the composition is skewed to basic and acidic residues.

In terms of tissue distribution, submandibular gland acinar cells.

Its subcellular location is the secreted. Its function is as follows. GRP proteins have a marked affinity for hydroxyapatite. They may play a role in the formation of the protective acquired pellicle at the saliva-tooth interface. The protein is Submandibular gland secretory Glx-rich protein CA (Grpca) of Rattus norvegicus (Rat).